Consider the following 95-residue polypeptide: MTITKNKISLMLNSKLGFSNNLCEEIVNTVFSNILEIAKVQKLTLKNFGSFEVKQKKQRPGINFHTKSPVMIASKKNLRFSPSEKLKALINKSMR.

This sequence belongs to the bacterial histone-like protein family.

The protein is Histone-like DNA-binding protein of Rickettsia typhi (strain ATCC VR-144 / Wilmington).